The following is a 686-amino-acid chain: Chondroitin synthase (686 aa).

Positions 130 to 417 are galactosaminyltransferase; A1 domain; it reads YVWAGKRKEL…LLQQKVPYFY (288 aa). UDP-N-acetyl-alpha-D-galactosamine contacts are provided by residues proline 157, arginine 161, aspartate 188, tyrosine 217, arginine 223, and 239 to 240; that span reads DC. A Mn(2+)-binding site is contributed by aspartate 241. Residue 361–362 participates in UDP-N-acetyl-alpha-D-galactosamine binding; it reads ED. Histidine 386 contacts Mn(2+). A glucuronosyltransferase; A2 domain region spans residues 418–682; it reads RKKEKIESAT…ECRKYTWEKI (265 aa). Residues tyrosine 441, aspartate 469, and 517–520 contribute to the UDP-alpha-D-glucuronate site; that span reads QLDS. Aspartate 521 serves as a coordination point for Mn(2+). Residues histidine 581 and 603–604 contribute to the UDP-alpha-D-glucuronate site; that span reads AV. Residue histidine 631 participates in Mn(2+) binding.

Belongs to the glycosyltransferase 2 family. CS/HAS subfamily. Mn(2+) is required as a cofactor.

The catalysed reaction is 3-O-(beta-D-GlcA-(1-&gt;3)-beta-D-GalNAc-(1-&gt;4)-beta-D-GlcA-(1-&gt;3)-beta-D-Gal-(1-&gt;3)-beta-D-Gal-(1-&gt;4)-beta-D-Xyl)-L-seryl-[protein] + UDP-N-acetyl-alpha-D-galactosamine = 3-O-(beta-D-GalNAc-(1-&gt;4)-beta-D-GlcA-(1-&gt;3)-beta-D-GalNAc-(1-&gt;4)-beta-D-GlcA-(1-&gt;3)-beta-D-Gal-(1-&gt;3)-beta-D-Gal-(1-&gt;4)-beta-D-Xyl)-L-seryl-[protein] + UDP + H(+). It catalyses the reaction 3-O-{beta-D-GlcA-(1-&gt;3)-[beta-D-GalNAc-(1-&gt;4)-beta-D-GlcA-(1-&gt;3)](n)-beta-D-GalNAc-(1-&gt;4)-beta-D-GlcA-(1-&gt;3)-beta-D-Gal-(1-&gt;3)-beta-D-Gal-(1-&gt;4)-beta-D-Xyl}-L-seryl-[protein] + UDP-N-acetyl-alpha-D-galactosamine = 3-O-{[beta-D-GalNAc-(1-&gt;4)-beta-D-GlcA-(1-&gt;3)](n+1)-beta-D-GalNAc-(1-&gt;4)-beta-D-GlcA-(1-&gt;3)-beta-D-Gal-(1-&gt;3)-beta-D-Gal-(1-&gt;4)-beta-D-Xyl}-L-seryl-[protein] + UDP + H(+). It carries out the reaction 3-O-(beta-D-GalNAc-(1-&gt;4)-beta-D-GlcA-(1-&gt;3)-beta-D-Gal-(1-&gt;3)-beta-D-Gal-(1-&gt;4)-beta-D-Xyl)-L-seryl-[protein] + UDP-alpha-D-glucuronate = 3-O-(beta-D-GlcA-(1-&gt;3)-beta-D-GalNAc-(1-&gt;4)-beta-D-GlcA-(1-&gt;3)-beta-D-Gal-(1-&gt;3)-beta-D-Gal-(1-&gt;4)-beta-D-Xyl)-L-seryl-[protein] + UDP + H(+). The enzyme catalyses 3-O-{[beta-D-GalNAc-(1-&gt;4)-beta-D-GlcA-(1-&gt;3)](n)-beta-D-GalNAc-(1-&gt;4)-beta-D-GlcA-(1-&gt;3)-beta-D-Gal-(1-&gt;3)-beta-D-Gal-(1-&gt;4)-beta-D-Xyl}-L-seryl-[protein] + UDP-alpha-D-glucuronate = 3-O-{beta-D-GlcA-(1-&gt;3)-[beta-D-GalNAc-(1-&gt;4)-beta-D-GlcA-(1-&gt;3)](n)-beta-D-GalNAc-(1-&gt;4)-beta-D-GlcA-(1-&gt;3)-beta-D-Gal-(1-&gt;3)-beta-D-Gal-(1-&gt;4)-beta-D-Xyl}-L-seryl-[protein] + UDP + H(+). Glycosyltransferase that catalyzes elongation of chondroitin, a polysaccharide composed of a repeating disaccharide of N-acetylgalactosamine (GalNAc) and glucuronic acid (GlcUA) units, by alternatively transferring the GlcUA and GalNAc moiety from UDP-GlcUA and UDP-GalNAc to the non-reducing ends of the chondroitin chain. Each chondroitin unit has the composition beta-(1-&gt;4)-GlcUA-beta-(1-&gt;3)-GalNAc. This chain is Chondroitin synthase (kfoC), found in Escherichia coli.